The primary structure comprises 267 residues: Tetrahydromethanopterin S-methyltransferase subunit C (267 aa).

Transmembrane regions (helical) follow at residues 19-39 (IMAL…FAPP), 75-95 (IGML…SVGG), 97-117 (AGPI…GALA), 140-160 (TLVI…ASVV), 162-182 (YVVA…GILH), 198-218 (LMLA…ASSL), and 221-241 (GLMA…VAFS).

It belongs to the MtrC family. The complex is composed of 8 subunits; MtrA, MtrB, MtrC, MtrD, MtrE, MtrF, MtrG and MtrH.

The protein resides in the cell membrane. It carries out the reaction 5-methyl-5,6,7,8-tetrahydromethanopterin + coenzyme M + 2 Na(+)(in) = 5,6,7,8-tetrahydromethanopterin + methyl-coenzyme M + 2 Na(+)(out). It functions in the pathway one-carbon metabolism; methanogenesis from CO(2); methyl-coenzyme M from 5,10-methylene-5,6,7,8-tetrahydromethanopterin: step 2/2. Its function is as follows. Part of a complex that catalyzes the formation of methyl-coenzyme M and tetrahydromethanopterin from coenzyme M and methyl-tetrahydromethanopterin. This is an energy-conserving, sodium-ion translocating step. The polypeptide is Tetrahydromethanopterin S-methyltransferase subunit C (Methanosarcina barkeri (strain Fusaro / DSM 804)).